A 97-amino-acid chain; its full sequence is Mitochondrial import inner membrane translocase subunit Tim8 A (97 aa).

The Twin CX3C motif motif lies at 43–66 (CWEKCMDKPGPKLDSRAEACFVNC). 2 cysteine pairs are disulfide-bonded: Cys43-Cys66 and Cys47-Cys62. Phosphoserine occurs at positions 57, 87, 94, and 96.

It belongs to the small Tim family. Heterohexamer; composed of 3 copies of TIMM8A and 3 copies of TIMM13, named soluble 70 kDa complex. Associates with the TIM22 complex, whose core is composed of TIMM22. In terms of tissue distribution, highly expressed in fetal and adult brain, followed by fetal lung, liver and kidney. Also expressed in heart, placenta, lung, liver, kidney, pancreas, skeletal muscle and heart.

Its subcellular location is the mitochondrion inner membrane. In terms of biological role, mitochondrial intermembrane chaperone that participates in the import and insertion of some multi-pass transmembrane proteins into the mitochondrial inner membrane. Also required for the transfer of beta-barrel precursors from the TOM complex to the sorting and assembly machinery (SAM complex) of the outer membrane. Acts as a chaperone-like protein that protects the hydrophobic precursors from aggregation and guide them through the mitochondrial intermembrane space. The TIMM8-TIMM13 complex mediates the import of proteins such as TIMM23, SLC25A12/ARALAR1 and SLC25A13/ARALAR2, while the predominant TIMM9-TIMM10 70 kDa complex mediates the import of much more proteins. Probably necessary for normal neurologic development. This chain is Mitochondrial import inner membrane translocase subunit Tim8 A (TIMM8A), found in Homo sapiens (Human).